Consider the following 955-residue polypeptide: 26S proteasome non-ATPase regulatory subunit 1 (955 aa).

The interval 279-313 is disordered; the sequence is PGSTNTGTVPGSEKDSDAMEAEEKPGSTCVGKSAE. The span at 290–303 shows a compositional bias: basic and acidic residues; that stretch reads SEKDSDAMEAEEKP. 10 PC repeats span residues 403 to 436, 441 to 474, 476 to 510, 511 to 545, 547 to 580, 581 to 616, 617 to 649, 651 to 685, 686 to 726, and 729 to 761; these read TATA…PGSA, GGLY…DIVR, GGSL…VTGE, AAGL…EKIL, GLAV…ILRR, SGMY…DVRR, AAVE…PHVR, GAAM…YVRQ, GALI…DVMA, and GAIL…PSVV. Disordered regions lie at residues 839–879 and 932–955; these read AKKK…NFQL and AHGP…YIDD. Basic and acidic residues-rich tracts occupy residues 842–854 and 861–874; these read KEKE…KEEE and TEKK…KEPE. The span at 938–955 shows a compositional bias: acidic residues; the sequence is EEEEQEPEPPEPFEYIDD.

Belongs to the proteasome subunit S1 family. As to quaternary structure, component of the 19S proteasome regulatory particle complex. The 26S proteasome consists of a 20S core particle (CP) and two 19S regulatory subunits (RP). The regulatory particle is made of a lid composed of 9 subunits, a base containing 6 ATPases and few additional components including PSMD1. Interacts with ADRM1.

Component of the 26S proteasome, a multiprotein complex involved in the ATP-dependent degradation of ubiquitinated proteins. This complex plays a key role in the maintenance of protein homeostasis by removing misfolded or damaged proteins, which could impair cellular functions, and by removing proteins whose functions are no longer required. Therefore, the proteasome participates in numerous cellular processes, including cell cycle progression, apoptosis, or DNA damage repair. This Gallus gallus (Chicken) protein is 26S proteasome non-ATPase regulatory subunit 1 (PSMD1).